Consider the following 112-residue polypeptide: uncharacterized protein (112 aa).

This is an uncharacterized protein from Bacillus subtilis (strain 168).